Reading from the N-terminus, the 252-residue chain is Receptor expression-enhancing protein 2 (252 aa).

The next 2 membrane-spanning stretches (helical) occupy residues 1 to 21 (MVSW…YPAY) and 35 to 55 (YVKW…ETLT). Residue Ser-150 is modified to Phosphoserine. Residues 165–252 (LQRPDGRLRP…KKTSGGGDSA (88 aa)) are disordered. Over residues 203–217 (SRTEASEDDMGDKAP) the composition is skewed to basic and acidic residues.

This sequence belongs to the DP1 family. In terms of assembly, interacts with odorant receptor proteins. Detected in brain, heart and skeletal muscle, and at low levels in placenta, kidney and pancreas. Expressed in circumvallate papillae.

It localises to the membrane. Required for endoplasmic reticulum (ER) network formation, shaping and remodeling. May enhance the cell surface expression of odorant receptors. This chain is Receptor expression-enhancing protein 2 (REEP2), found in Homo sapiens (Human).